Reading from the N-terminus, the 247-residue chain is 1-(5-phosphoribosyl)-5-[(5-phosphoribosylamino)methylideneamino] imidazole-4-carboxamide isomerase (247 aa).

The active-site Proton acceptor is Asp8. Asp129 serves as the catalytic Proton donor.

This sequence belongs to the HisA/HisF family.

The protein localises to the cytoplasm. The catalysed reaction is 1-(5-phospho-beta-D-ribosyl)-5-[(5-phospho-beta-D-ribosylamino)methylideneamino]imidazole-4-carboxamide = 5-[(5-phospho-1-deoxy-D-ribulos-1-ylimino)methylamino]-1-(5-phospho-beta-D-ribosyl)imidazole-4-carboxamide. It participates in amino-acid biosynthesis; L-histidine biosynthesis; L-histidine from 5-phospho-alpha-D-ribose 1-diphosphate: step 4/9. This chain is 1-(5-phosphoribosyl)-5-[(5-phosphoribosylamino)methylideneamino] imidazole-4-carboxamide isomerase, found in Solidesulfovibrio magneticus (strain ATCC 700980 / DSM 13731 / RS-1) (Desulfovibrio magneticus).